Consider the following 793-residue polypeptide: Neurobeachin (793 aa).

Disordered regions lie at residues 68-92 and 685-793; these read ENIK…TGAK and RETA…EILK. Polar residues-rich tracts occupy residues 77 to 90, 689 to 710, 750 to 762, and 782 to 793; these read NVST…QTTG, RSGS…STET, NILN…TSTG, and ESLTESPSEILK.

It belongs to the WD repeat neurobeachin family. In terms of assembly, interacts with RII subunit of PKA. As to expression, forebrain and cerebellum.

It localises to the cytoplasm. The protein resides in the membrane. Its function is as follows. Binds to type II regulatory subunits of protein kinase A and anchors/targets them to the membrane. May anchor the kinase to cytoskeletal and/or organelle-associated proteins. This chain is Neurobeachin (NBEA), found in Gallus gallus (Chicken).